We begin with the raw amino-acid sequence, 92 residues long: Small ribosomal subunit protein uS19c (92 aa).

Belongs to the universal ribosomal protein uS19 family.

The protein localises to the plastid. Its subcellular location is the chloroplast. In terms of biological role, protein S19 forms a complex with S13 that binds strongly to the 16S ribosomal RNA. The polypeptide is Small ribosomal subunit protein uS19c (Pinus koraiensis (Korean pine)).